The chain runs to 381 residues: Succinyl-diaminopimelate desuccinylase (381 aa).

His69 lines the Zn(2+) pocket. The active site involves Asp71. Asp103 contacts Zn(2+). Glu137 serves as the catalytic Proton acceptor. Zn(2+)-binding residues include Glu138, Glu166, and His355.

Belongs to the peptidase M20A family. DapE subfamily. In terms of assembly, homodimer. The cofactor is Zn(2+). Co(2+) is required as a cofactor.

It carries out the reaction N-succinyl-(2S,6S)-2,6-diaminopimelate + H2O = (2S,6S)-2,6-diaminopimelate + succinate. Its pathway is amino-acid biosynthesis; L-lysine biosynthesis via DAP pathway; LL-2,6-diaminopimelate from (S)-tetrahydrodipicolinate (succinylase route): step 3/3. In terms of biological role, catalyzes the hydrolysis of N-succinyl-L,L-diaminopimelic acid (SDAP), forming succinate and LL-2,6-diaminopimelate (DAP), an intermediate involved in the bacterial biosynthesis of lysine and meso-diaminopimelic acid, an essential component of bacterial cell walls. This chain is Succinyl-diaminopimelate desuccinylase, found in Rickettsia akari (strain Hartford).